A 695-amino-acid polypeptide reads, in one-letter code: Phenoloxidase subunit 2 (695 aa).

3 residues coordinate Cu cation: H215, H219, and H245. Residue E353 is the Proton acceptor of the active site. 3 residues coordinate Cu cation: H368, H372, and H408. Cystine bridges form between C586-C630 and C588-C637.

Heterodimer. Forms a complex with an interleukin 1-like protein as a consequence of a host defense response. Cu(2+) is required as a cofactor. In terms of processing, the N-terminus is blocked. In terms of tissue distribution, synthesized by oenocytoids, a type of hemocyte, and released into the hemolymph plasma.

It localises to the secreted. The enzyme catalyses 2 L-dopa + O2 = 2 L-dopaquinone + 2 H2O. It catalyses the reaction L-tyrosine + O2 = L-dopaquinone + H2O. With respect to regulation, activated by immulectin and lipopolysaccharide. This is a copper-containing oxidase that functions in the formation of pigments such as melanins and other polyphenolic compounds. Catalyzes the rate-limiting conversions of tyrosine to DOPA, DOPA to DOPA-quinone and possibly 5,6 dihydroxyindole to indole-5'6 quinone. Binds to the surface of hemocytes and is involved in hemocyte melanization. This chain is Phenoloxidase subunit 2, found in Manduca sexta (Tobacco hawkmoth).